A 32-amino-acid chain; its full sequence is Potassium channel toxin alpha-KTx 9.4 (32 aa).

3 disulfides stabilise this stretch: Cys-3–Cys-19, Cys-6–Cys-24, and Cys-10–Cys-26.

In terms of tissue distribution, expressed by the venom gland.

The protein localises to the secreted. Blocker of human voltage-gated potassium channel Kv1.1/KCNA1. This is Potassium channel toxin alpha-KTx 9.4 from Hottentotta tamulus (Eastern Indian scorpion).